A 248-amino-acid chain; its full sequence is Serine/arginine-rich splicing factor 1 (248 aa).

An N-acetylserine modification is found at serine 2. Phosphoserine is present on serine 2. The 76-residue stretch at 16–91 (CRIYVGNLPP…YRLRVEFPRS (76 aa)) folds into the RRM 1 domain. Lysine 30 participates in a covalent cross-link: Glycyl lysine isopeptide (Lys-Gly) (interchain with G-Cter in SUMO2). Lysine 38 carries the N6-acetyllysine; alternate modification. A Glycyl lysine isopeptide (Lys-Gly) (interchain with G-Cter in SUMO2); alternate cross-link involves residue lysine 38. Residues 88–134 (FPRSGRGTGRGGGGGGGGGAPRGRYGPPSRRSENRVVVSGLPPSGSW) are disordered. 3 positions are modified to asymmetric dimethylarginine; alternate: arginine 93, arginine 97, and arginine 109. Residues arginine 93, arginine 97, and arginine 109 each carry the omega-N-methylarginine; alternate modification. Over residues 93 to 108 (RGTGRGGGGGGGGGAP) the composition is skewed to gly residues. Omega-N-methylarginine is present on arginine 111. Positions 121-195 (NRVVVSGLPP…ETAYIRVKVD (75 aa)) constitute an RRM 2 domain. Serine 133 is modified (phosphoserine). Lysine 179 carries the N6-acetyllysine modification. Residues 191-248 (RVKVDGPRSPSYGRSRSRSRSRSRNRSRSNSRSRSYSPRRSRGSPRYSPRHSRSRSRT) are disordered. The tract at residues 198–247 (RSPSYGRSRSRSRSRSRNRSRSNSRSRSYSPRRSRGSPRYSPRHSRSRSR) is interaction with SAFB1. Phosphoserine is present on residues serine 199 and serine 201. Position 202 is a phosphotyrosine (tyrosine 202). 6 positions are modified to phosphoserine: serine 205, serine 207, serine 209, serine 231, serine 234, and serine 238. Residues 205-248 (SRSRSRSRSRNRSRSNSRSRSYSPRRSRGSPRYSPRHSRSRSRT) are compositionally biased toward basic residues.

This sequence belongs to the splicing factor SR family. As to quaternary structure, consists of two polypeptides of p32 and p33. Identified in the spliceosome C complex. Component of a ribonucleoprotein complex containing mRNAs and RNA-binding proteins including DDX5, HNRNPH2 and SRSF1 as well as splicing regulator ARVCF. In vitro, self-associates and binds SRSF2, SNRNP70 and U2AF1 but not U2AF2. Binds SREK1/SFRS12. Interacts with SAFB/SAFB1. Interacts with PSIP1/LEDGF. Interacts with RSRC1 (via Arg/Ser-rich domain). Interacts with ZRSR2/U2AF1-RS2. Interacts with CCDC55 (via C-terminus). Interacts with SRPK1 and a sliding docking interaction is essential for its sequential and processive phosphorylation by SRPK1. Interacts with NXF1. Interacts with CCNL1, CCNL2 and CDK11B. Interacts with RRP1B. Interacts (when phosphorylated in its RS domain) with TNPO3; promoting nuclear import. Interacts with ILDR1 (via C-terminus) and ILDR2. Post-translationally, phosphorylated by CLK1, CLK2, CLK3 and CLK4. Phosphorylated by SRPK1 at multiple serines in its RS domain via a directional (C-terminal to N-terminal) and a dual-track mechanism incorporating both processive phosphorylation (in which the kinase stays attached to the substrate after each round of phosphorylation) and distributive phosphorylation steps (in which the kinase and substrate dissociate after each phosphorylation event). The RS domain of SRSF1 binds to a docking groove in the large lobe of the kinase domain of SRPK1 and this induces certain structural changes in SRPK1 and/or RRM 2 domain of SRSF1, allowing RRM 2 to bind the kinase and initiate phosphorylation. The cycles continue for several phosphorylation steps in a processive manner (steps 1-8) until the last few phosphorylation steps (approximately steps 9-12). During that time, a mechanical stress induces the unfolding of the beta-4 motif in RRM 2, which then docks at the docking groove of SRPK1. This also signals RRM 2 to begin to dissociate, which facilitates SRSF1 dissociation after phosphorylation is completed. Asymmetrically dimethylated at arginines, probably by PRMT1, methylation promotes localization to nuclear speckles.

It is found in the cytoplasm. The protein localises to the nucleus speckle. In terms of biological role, plays a role in preventing exon skipping, ensuring the accuracy of splicing and regulating alternative splicing. Interacts with other spliceosomal components, via the RS domains, to form a bridge between the 5'- and 3'-splice site binding components, U1 snRNP and U2AF. Can stimulate binding of U1 snRNP to a 5'-splice site-containing pre-mRNA. Binds to purine-rich RNA sequences, either the octamer, 5'-RGAAGAAC-3' (r=A or G) or the decamers, AGGACAGAGC/AGGACGAAGC. Binds preferentially to the 5'-CGAGGCG-3' motif in vitro. Three copies of the octamer constitute a powerful splicing enhancer in vitro, the ASF/SF2 splicing enhancer (ASE) which can specifically activate ASE-dependent splicing. May function as export adapter involved in mRNA nuclear export through the TAP/NXF1 pathway. The chain is Serine/arginine-rich splicing factor 1 (SRSF1) from Pongo abelii (Sumatran orangutan).